Reading from the N-terminus, the 770-residue chain is uncharacterized protein (770 aa).

The segment at 736–770 (GSGQPGQSPANVGDDPNRMVQSSASQTQIGHVFNN) is disordered. A compositionally biased stretch (polar residues) spans 754–770 (MVQSSASQTQIGHVFNN).

This is an uncharacterized protein from Caenorhabditis elegans.